The primary structure comprises 180 residues: ADP-ribosylation factor 5 (180 aa).

Gly2 is lipidated: N-myristoyl glycine. Residues 24–31 (GLDAAGKT), 67–71 (DVGGQ), and 126–129 (NKQD) each bind GTP.

It belongs to the small GTPase superfamily. Arf family.

The protein resides in the golgi apparatus. GTP-binding protein involved in protein trafficking; may modulate vesicle budding and uncoating within the Golgi apparatus. This chain is ADP-ribosylation factor 5 (ARF5), found in Gallus gallus (Chicken).